We begin with the raw amino-acid sequence, 311 residues long: Tyrosine recombinase XerD (311 aa).

The Core-binding (CB) domain occupies 2–95 (KTLALQLQGY…AVRGLHRFAA (94 aa)). Residues 116 to 304 (RLPKSLTIDE…TVHALREVWA (189 aa)) enclose the Tyr recombinase domain. Catalysis depends on residues Arg160, Lys184, His256, Arg259, and His282. The O-(3'-phospho-DNA)-tyrosine intermediate role is filled by Tyr291.

The protein belongs to the 'phage' integrase family. XerD subfamily. As to quaternary structure, forms a cyclic heterotetrameric complex composed of two molecules of XerC and two molecules of XerD.

It is found in the cytoplasm. Functionally, site-specific tyrosine recombinase, which acts by catalyzing the cutting and rejoining of the recombining DNA molecules. The XerC-XerD complex is essential to convert dimers of the bacterial chromosome into monomers to permit their segregation at cell division. It also contributes to the segregational stability of plasmids. The sequence is that of Tyrosine recombinase XerD from Mycobacterium tuberculosis (strain CDC 1551 / Oshkosh).